A 372-amino-acid chain; its full sequence is Actin-related protein 2/3 complex subunit 1B (372 aa).

WD repeat units follow at residues Phe6 to Val45, Glu50 to Thr89, Arg94 to Lys135, Pro140 to Arg179, Ser242 to Ser280, and Leu324 to Lys367.

This sequence belongs to the WD repeat ARPC1 family. Component of the Arp2/3 complex composed of ACTR2/ARP2, ACTR3/ARP3, ARPC1B/p41-ARC, ARPC2/p34-ARC, ARPC3/p21-ARC, ARPC4/p20-ARC and ARPC5/p16-ARC.

The protein resides in the cytoplasm. It is found in the cytoskeleton. The protein localises to the nucleus. Functionally, component of the Arp2/3 complex, a multiprotein complex that mediates actin polymerization upon stimulation by nucleation-promoting factor (NPF). The Arp2/3 complex mediates the formation of branched actin networks in the cytoplasm, providing the force for cell motility. In addition to its role in the cytoplasmic cytoskeleton, the Arp2/3 complex also promotes actin polymerization in the nucleus, thereby regulating gene transcription and repair of damaged DNA. The Arp2/3 complex promotes homologous recombination (HR) repair in response to DNA damage by promoting nuclear actin polymerization, leading to drive motility of double-strand breaks (DSBs). The chain is Actin-related protein 2/3 complex subunit 1B (ARPC1B) from Bos taurus (Bovine).